The chain runs to 298 residues: Acetylglutamate kinase (298 aa).

Substrate-binding positions include 69-70, arginine 91, and asparagine 196; that span reads GG.

It belongs to the acetylglutamate kinase family. ArgB subfamily.

It localises to the cytoplasm. The enzyme catalyses N-acetyl-L-glutamate + ATP = N-acetyl-L-glutamyl 5-phosphate + ADP. It participates in amino-acid biosynthesis; L-arginine biosynthesis; N(2)-acetyl-L-ornithine from L-glutamate: step 2/4. In terms of biological role, catalyzes the ATP-dependent phosphorylation of N-acetyl-L-glutamate. The sequence is that of Acetylglutamate kinase from Nitrobacter hamburgensis (strain DSM 10229 / NCIMB 13809 / X14).